We begin with the raw amino-acid sequence, 273 residues long: SPRY domain-containing SOCS box protein 1 (273 aa).

Tyrosine 31 is subject to Phosphotyrosine; by MET. Positions 33–231 (KPTRLDLLLD…IRMRYLNGLD (199 aa)) constitute a B30.2/SPRY domain. The region spanning 232–273 (PEPLPLMDLCRRSVRLALGRERLGEIHTLPLPASLKAYLLYQ) is the SOCS box domain.

The protein belongs to the SPSB family. In terms of assembly, component of the probable ECS(SPSB1) E3 ubiquitin-protein ligase complex which contains CUL5, RNF7/RBX2, Elongin BC complex and SPSB1. Interacts with CUL5, RNF7, ELOB and ELOC. Directly interacts with MET tyrosine kinase domain in the presence and in the absence of HGF, however HGF treatment has a positive effect on this interaction. When phosphorylated, interacts with RASA1 without affecting its stability. Interacts (via B30.2/SPRY domain) with PAWR; this interaction is direct and occurs in association with the Elongin BC complex. Interacts with NOS2. Interacts with EPHB2.

Its subcellular location is the cytoplasm. It localises to the cytosol. Its pathway is protein modification; protein ubiquitination. In terms of biological role, substrate recognition component of a SCF-like ECS (Elongin BC-CUL2/5-SOCS-box protein) E3 ubiquitin-protein ligase complex which mediates the ubiquitination and subsequent proteasomal degradation of target proteins. Negatively regulates nitric oxide (NO) production and limits cellular toxicity in activated macrophages by mediating the ubiquitination and proteasomal degradation of NOS2. Acts as a bridge which links NOS2 with the ECS E3 ubiquitin ligase complex components ELOC and CUL5. This is SPRY domain-containing SOCS box protein 1 (SPSB1) from Homo sapiens (Human).